Reading from the N-terminus, the 127-residue chain is MSESEKYRIEVEAIAEFVPGQSDPDENRYVFAYHITLTNTGEVPAQLISRHWVITDGAGKVQEVRGLGVIGEQPMLAPGQQFSYSSGSVLETPVGTMQGSYQMAAEDGHRFDAEIPAFMLAMPRVLH.

Positions 3–127 (ESEKYRIEVE…FMLAMPRVLH (125 aa)) constitute an ApaG domain.

This chain is Protein ApaG, found in Aromatoleum aromaticum (strain DSM 19018 / LMG 30748 / EbN1) (Azoarcus sp. (strain EbN1)).